Here is a 491-residue protein sequence, read N- to C-terminus: MATFKDACYHYKKLNKLNSLVLKLGANDEWRPAPVTKYKGWCLDCCQYTNLTYCRGCALYHVCQWCSQYNRCFLDEEPHLLRMRTFKDVVTKEDIEGLLTMYETLFPINEKLVNKFINSVKQRKCRNEYLLEWYNHLLMPITLQALTINLEDNVYYMFGYYDCMEHENQTPFQFVNLLEKYDKLLLDDRNFHRMSHLPVILQQEYALRYFSKSRFLSKGKKRLSRSDFSDNLMEDRHSPTSLMQVVRNCISIHIDDCEWNKACTLIVDARNYISIMNSSYTEHYSVSQRCKLFTKYKFGIVSKLVKPNYIFSSHESCALNVHNCKWCQINNHYKVWEDFRLRKIYNNVMDFIRALVKSNVNVGHCSSQESVYKYVPDLFLICKTEKWSEAVEMLFNYLEPVNVNGTEYVLLDYEVNWEVRGLVMQNMDGKVPRILNMNDTKKILSAMIFDWFDTRYMRETPMTTSTTNQLRTLNKRNELIDEYDLELSDVE.

The segment at 1–81 (MATFKDACYH…CFLDEEPHLL (81 aa)) is RNA-binding. The zinc-binding domain stretch occupies residues 42 to 79 (CLDCCQYTNLTYCRGCALYHVCQWCSQYNRCFLDEEPH). Positions 82–176 (RMRTFKDVVT…ENQTPFQFVN (95 aa)) are important for cytoskeleton localization. Positions 320–491 (NVHNCKWCQI…EYDLELSDVE (172 aa)) are interaction with host IRF3. The pLxIS motif motif lies at 485-488 (LELS).

It belongs to the rotavirus NSP1 family. Interacts (via C-terminus) with host IRF3; this interaction leads to IRF3 degradation. Interacts with host IRF7; this interaction leads to IRF7 degradation. Interacts with host CUL1 and CUL3.

The protein resides in the host cytoplasm. The protein localises to the host cytoskeleton. Functionally, plays a role in the inhibition of host innate immunity by inducing the degradation of key host factors required to activate interferon production such as IRF3, IRF5 or IRF7. Associates with components of cullin RING ligases (CRLs) including CUL1 or CUL3, which are essential multisubunit ubiquitination complexes, to modulate their activities. This chain is Non-structural protein 1, found in Bos taurus (Bovine).